We begin with the raw amino-acid sequence, 405 residues long: MFNYEELFQTYKTPFYLYDFDKIKQAFLNYKEAFKGRKSLICYALKANSNLSILSLLANLGSGADCVSIGEIQRALKAGIKPYKIVFSGVGKSAFEIEQALKLNILFLNVESFMELKTIETIAQSLGIKARISIRINPNIDAKTHPYISTGLKENKFGVEEKEALEMFLWAKKSAFLEPVSVHFHIGSQLLDLDPITEASQKVAKIAKSLIALGIDLRFFDVGGGIGVSYENEETIKLYDYAQGILNSLQGLDLTIICEPGRSIVAESGELITQVLYEKKAQNKRFVIVDAGMNDFLRPSLYHAKHAIRVITPCGGREISPCDVVGPVCESSDTFLKDANLPELEPGDKLAIEKVGAYGSSMASQYNSRPKLLELALEDHKIRVIRKREALEDLWRLEIEGLEGV.

K46 is subject to N6-(pyridoxal phosphate)lysine. Residues G225 and 259–262 (EPGR) contribute to the pyridoxal 5'-phosphate site. Positions 262, 298, and 302 each coordinate substrate. C329 functions as the Proton donor in the catalytic mechanism. Substrate-binding residues include E330 and Y358. Y358 is a pyridoxal 5'-phosphate binding site.

Belongs to the Orn/Lys/Arg decarboxylase class-II family. LysA subfamily. As to quaternary structure, homodimer. Pyridoxal 5'-phosphate is required as a cofactor.

The enzyme catalyses meso-2,6-diaminopimelate + H(+) = L-lysine + CO2. It participates in amino-acid biosynthesis; L-lysine biosynthesis via DAP pathway; L-lysine from DL-2,6-diaminopimelate: step 1/1. Functionally, specifically catalyzes the decarboxylation of meso-diaminopimelate (meso-DAP) to L-lysine. This is Diaminopimelate decarboxylase from Helicobacter pylori (strain J99 / ATCC 700824) (Campylobacter pylori J99).